Reading from the N-terminus, the 768-residue chain is Actin filament-associated protein 1-like 1 (768 aa).

A disordered region spans residues 82 to 145; sequence DLRDMPEDDG…GKSPEYISSH (64 aa). 4 positions are modified to phosphoserine: serine 94, serine 98, serine 104, and serine 153. The disordered stretch occupies residues 173–211; the sequence is GELKSSYNDSDAMSSSYESYDEEEEEGKSPQPRHQWPSE. A compositionally biased stretch (low complexity) spans 177 to 190; the sequence is SSYNDSDAMSSSYE. The PH 1 domain maps to 220–316; the sequence is ECRICAFLLR…WLKVIREVSK (97 aa). Serine 329 and serine 343 each carry phosphoserine. The 95-residue stretch at 418–512 folds into the PH 2 domain; that stretch reads EVPCCGYLNV…WLGLLLVEMG (95 aa). Tyrosine 557 bears the Phosphotyrosine mark. The segment at 566 to 604 is disordered; it reads QDEEPERPTGAQVKRHASSCSEKSHRVDPQVKVKRHASS. Residues 587-596 show a composition bias toward basic and acidic residues; it reads EKSHRVDPQV. Residues 611 to 700 adopt a coiled-coil conformation; the sequence is GKNRAEEDAR…VAVKERLQQS (90 aa). Residues 705 to 768 form a disordered region; it reads PALGLSVSSK…KAKEWEMKKT (64 aa). The segment covering 710-729 has biased composition (polar residues); the sequence is SVSSKPKSGETANKPQNSVP. A Phosphoserine modification is found at serine 747. A compositionally biased stretch (basic and acidic residues) spans 759-768; that stretch reads KAKEWEMKKT.

Interacts with CTTN. Expressed in breast, colon and brain. In all 3 tissues, expressed in the microvasculature (at protein level). In addition, in the breast, found in the contractile myoepithelial cell layer which surrounds the breast ducts (at protein level). In the colon, expressed in the mucous membrane and colonic crypts and in the smooth muscle cell layer which provide movement of the colon (at protein level). In the cerebellum, localized around the Purkinje neurons and the granule cells of the granular layer, but not inside cell bodies (at protein level). Outside of the cerebellar cortex, expressed in glial cells (at protein level). Highly expressed away from the cell bodies within the dentate nucleus (at protein level).

It is found in the cytoplasm. The protein resides in the cell projection. The protein localises to the podosome. It localises to the invadopodium. Its subcellular location is the cytoskeleton. It is found in the stress fiber. In terms of biological role, may be involved in podosome and invadosome formation. The polypeptide is Actin filament-associated protein 1-like 1 (AFAP1L1) (Homo sapiens (Human)).